The chain runs to 216 residues: Vesicle-associated membrane protein 7A (216 aa).

Over 1–189 (MSQTDILYAC…KRKLWWQNKK (189 aa)) the chain is Cytoplasmic. The Longin domain maps to 6–112 (ILYACVSYKG…ATYDPFIRVL (107 aa)). Residues 126-186 (KMNLVMDQVS…VALKRKLWWQ (61 aa)) enclose the v-SNARE coiled-coil homology domain. Residues 190–210 (LAIAIGLVVCILIAVITLALL) traverse the membrane as a helical; Anchor for type IV membrane protein segment. Residues 211–216 (KYFKVI) are Vesicular-facing.

The protein belongs to the synaptobrevin family. Component of the SNARE complex composed of syn7A, syn8A, vamp7A and vti1A.

The protein localises to the cytoplasmic vesicle. The protein resides in the secretory vesicle membrane. It is found in the golgi apparatus. Its subcellular location is the trans-Golgi network membrane. It localises to the late endosome membrane. The protein localises to the lysosome membrane. The protein resides in the endoplasmic reticulum membrane. It is found in the phagosome membrane. In terms of biological role, involved in the targeting and/or fusion of transport vesicles to their target membrane during transport of proteins from the early endosome to the lysosome. Required for heterotypic fusion of late endosomes with lysosomes and homotypic lysosomal fusion. Required for calcium regulated lysosomal exocytosis. The protein is Vesicle-associated membrane protein 7A of Dictyostelium discoideum (Social amoeba).